The primary structure comprises 209 residues: Uracil phosphoribosyltransferase (209 aa).

Residues R79, R104, and 131 to 139 (DPMLATGGS) contribute to the 5-phospho-alpha-D-ribose 1-diphosphate site. Uracil is bound by residues I194 and 199–201 (GDA). Position 200 (D200) interacts with 5-phospho-alpha-D-ribose 1-diphosphate.

It belongs to the UPRTase family. The cofactor is Mg(2+).

It carries out the reaction UMP + diphosphate = 5-phospho-alpha-D-ribose 1-diphosphate + uracil. Its pathway is pyrimidine metabolism; UMP biosynthesis via salvage pathway; UMP from uracil: step 1/1. With respect to regulation, allosterically activated by GTP. In terms of biological role, catalyzes the conversion of uracil and 5-phospho-alpha-D-ribose 1-diphosphate (PRPP) to UMP and diphosphate. The chain is Uracil phosphoribosyltransferase from Anoxybacillus flavithermus (strain DSM 21510 / WK1).